Consider the following 252-residue polypeptide: Hydrolase phiM (252 aa).

Ser-126 acts as the Charge relay system in catalysis.

Belongs to the LovG family.

It functions in the pathway secondary metabolite biosynthesis. Its function is as follows. Hydrolase; part of the gene cluster that mediates the biosynthesis of the antihypercholesterolemic agents phomoidrides which are dimeric anhydrides. Within the pathway, phiM releases the C12-fatty acyl chain from phiA. The pathway begins with the highly reducing polyketide synthase tstA that catalyzes the formation of a C12-fatty acyl-ACP, starting from one acetate and 5 malonate units. The hydrolase tstM is involved in the release of the C12-fatty acyl chain from phiA. The alkylcitrate synthase (ACS) tstJ and the alkylcitrate dehydratase (ACDH) tstI then give rise to decarboxylated monomeric anhydrides by coupling the C12-fatty acyl chain with oxalacetic acid. The cyclase tstC is responsible for the dimerization of the monomeric anhydrides which leads to the production of prephomoidride that contains the characteristic bicyclo[4.3.1]deca-1,6-diene system of phomoidrides. Iterative oxidation catalyzed by the alpha-ketoglutarate-dependent dioxygenase tstK produced then phomoidride A. Finally, the methyltransferase tstE converts phomoidride A to phomoidride B via an acetalization reaction. The phosphatidylethanolamine-binding protein tstB and tstN are not essential for dimerization and their functions have still to be determined. This is Hydrolase phiM from Talaromyces stipitatus (strain ATCC 10500 / CBS 375.48 / QM 6759 / NRRL 1006) (Penicillium stipitatum).